The primary structure comprises 438 residues: Ribosome biogenesis protein NOP53 (438 aa).

Disordered stretches follow at residues 1–23 (MVAGKRTGAAKGSRHNKKYWRKG) and 247–346 (HPKY…RKKE). The segment covering 12 to 21 (GSRHNKKYWR) has biased composition (basic residues). Basic and acidic residues-rich tracts occupy residues 265–288 (KSMKTGGEAEPKSQRVECDRMTKE), 297–318 (QKLDKEEKRRLEEKAKEQDSHN), and 325–346 (LHKELDEEEKQRHEESEVRKKE).

This sequence belongs to the NOP53 family.

Its subcellular location is the nucleus. It is found in the nucleolus. The protein resides in the nucleoplasm. In terms of biological role, may play a role in ribosome biogenesis, being required for integration of the 5S RNP into the ribosomal large subunit. This Caenorhabditis elegans protein is Ribosome biogenesis protein NOP53.